The following is a 291-amino-acid chain: Tumor necrosis factor ligand superfamily member 10 (291 aa).

The Cytoplasmic segment spans residues 1-17 (MPSSGALKDLSFSQHFR). A helical; Signal-anchor for type II membrane protein membrane pass occupies residues 18-38 (MMVICIVLLQVLLQAVSVAVT). The Extracellular portion of the chain corresponds to 39–291 (YMYFTNEMKQ…ASFFGAFLIN (253 aa)). Residue Asn52 is glycosylated (N-linked (GlcNAc...) asparagine). A THD domain is found at 126-290 (VAAHITGITR…EASFFGAFLI (165 aa)). Cys240 provides a ligand contact to Zn(2+).

Belongs to the tumor necrosis factor family. As to quaternary structure, homotrimer. One TNFSF10 homotrimer interacts with three TNFSF10A mononers. One TNFSF10 homotrimer interacts with three TNFSF10B mononers. Post-translationally, tyrosine phosphorylated by PKDCC/VLK. As to expression, widespread.

The protein localises to the cell membrane. Its subcellular location is the secreted. Its function is as follows. Cytokine that binds to TNFRSF10A/TRAILR1, TNFRSF10B/TRAILR2, TNFRSF10C/TRAILR3, TNFRSF10D/TRAILR4 and possibly also to TNFRSF11B/OPG. Induces apoptosis. Its activity may be modulated by binding to the decoy receptors TNFRSF10C/TRAILR3, TNFRSF10D/TRAILR4 and TNFRSF11B/OPG that cannot induce apoptosis. The sequence is that of Tumor necrosis factor ligand superfamily member 10 (Tnfsf10) from Mus musculus (Mouse).